The following is a 123-amino-acid chain: Small ribosomal subunit protein uS12 (123 aa).

Residue Asp89 is modified to 3-methylthioaspartic acid. Residues 104–123 (TAGVKDRKQARSKYGAKRPK) form a disordered region. Basic residues predominate over residues 113–123 (ARSKYGAKRPK).

It belongs to the universal ribosomal protein uS12 family. In terms of assembly, part of the 30S ribosomal subunit. Contacts proteins S8 and S17. May interact with IF1 in the 30S initiation complex.

With S4 and S5 plays an important role in translational accuracy. Functionally, interacts with and stabilizes bases of the 16S rRNA that are involved in tRNA selection in the A site and with the mRNA backbone. Located at the interface of the 30S and 50S subunits, it traverses the body of the 30S subunit contacting proteins on the other side and probably holding the rRNA structure together. The combined cluster of proteins S8, S12 and S17 appears to hold together the shoulder and platform of the 30S subunit. This is Small ribosomal subunit protein uS12 from Chromobacterium violaceum (strain ATCC 12472 / DSM 30191 / JCM 1249 / CCUG 213 / NBRC 12614 / NCIMB 9131 / NCTC 9757 / MK).